Reading from the N-terminus, the 142-residue chain is Large-conductance mechanosensitive channel (142 aa).

A run of 2 helical transmembrane segments spans residues 14 to 34 (VVDLAVAVIIGAAFGKIVSSL) and 86 to 106 (FGQFITVAVNFLLIAFVVFLV).

The protein belongs to the MscL family. As to quaternary structure, homopentamer.

It localises to the cell inner membrane. Functionally, channel that opens in response to stretch forces in the membrane lipid bilayer. May participate in the regulation of osmotic pressure changes within the cell. This Rhizorhabdus wittichii (strain DSM 6014 / CCUG 31198 / JCM 15750 / NBRC 105917 / EY 4224 / RW1) (Sphingomonas wittichii) protein is Large-conductance mechanosensitive channel.